The primary structure comprises 613 residues: Zinc metalloproteinase-disintegrin-like atragin (613 aa).

The signal sequence occupies residues 1 to 20; the sequence is MIQALLVIICLAVFPHQGSS. The propeptide occupies 21–191; the sequence is IILESGNVND…DESIEKTSQL (171 aa). One can recognise a Peptidase M12B domain in the interval 205-400; that stretch reads KYIEFYVVVD…DRPQCILNKP (196 aa). Ca(2+) is bound by residues E208 and D292. Intrachain disulfides connect C316-C395 and C356-C379. Zn(2+)-binding residues include H341, H345, and H351. Residues C395, N398, I410, N413, F415, E417, E420, and D423 each coordinate Ca(2+). Residues 408 to 494 form the Disintegrin domain; it reads PPICGNYFVE…ECPTDVFQRN (87 aa). Disulfide bonds link C411/C440, C422/C435, C424/C430, C434/C457, C448/C454, C453/C479, C466/C486, C473/C505, C498/C510, C517/C567, C532/C575, C542/C577, C545/C555, C562/C601, and C595/C606. A glycan (N-linked (GlcNAc...) asparagine) is linked at N436. The D/ECD-tripeptide motif lies at 472–474; sequence DCD. 5 residues coordinate Ca(2+): D474, L475, E477, D489, and V490. The hypervariable region that may play important roles toward cell migration stretch occupies residues 560–574; the sequence is VKCGRLFCKRRNSMI.

It belongs to the venom metalloproteinase (M12B) family. P-III subfamily. P-IIIa sub-subfamily. Monomer. Requires Zn(2+) as cofactor. Expressed by the venom gland.

It localises to the secreted. Snake venom zinc metalloproteinase that seems to inhibit cell migration. This activity is dominated by the local structure of the hyper-variable region. The protein is Zinc metalloproteinase-disintegrin-like atragin of Naja atra (Chinese cobra).